Consider the following 34-residue polypeptide: MSDIN-like toxin proprotein 4 (34 aa).

Positions 1 to 10 (MSDINTARLP) are excised as a propeptide. The cyclopeptide (Leu-Pro) cross-link spans 11 to 20 (LFLPPVRMPP). Positions 21–34 (CVGDDIEMVLTRGE) are excised as a propeptide.

The protein belongs to the MSDIN fungal toxin family. Processed by the macrocyclase-peptidase enzyme POPB to yield a toxic cyclic decapeptide. POPB first removes 10 residues from the N-terminus. Conformational trapping of the remaining peptide forces the enzyme to release this intermediate rather than proceed to macrocyclization. The enzyme rebinds the remaining peptide in a different conformation and catalyzes macrocyclization of the N-terminal 10 residues.

In terms of biological role, probable toxin that belongs to the MSDIN-like toxin family responsible for a large number of food poisoning cases and deaths. The protein is MSDIN-like toxin proprotein 4 of Amanita bisporigera (Destroying angel).